A 386-amino-acid polypeptide reads, in one-letter code: Probable pectin lyase E (386 aa).

Residues 1–16 (MKTAVLSLFLALQTYA) form the signal peptide. C77 and C101 are disulfide-bonded. An N-linked (GlcNAc...) asparagine glycan is attached at N124. R251 is an active-site residue. A disulfide bridge connects residues C326 and C334.

Belongs to the polysaccharide lyase 1 family.

The protein resides in the secreted. It carries out the reaction Eliminative cleavage of (1-&gt;4)-alpha-D-galacturonan methyl ester to give oligosaccharides with 4-deoxy-6-O-methyl-alpha-D-galact-4-enuronosyl groups at their non-reducing ends.. Its function is as follows. Pectinolytic enzymes consist of four classes of enzymes: pectin lyase, polygalacturonase, pectin methylesterase and rhamnogalacturonase. Among pectinolytic enzymes, pectin lyase is the most important in depolymerization of pectin, since it cleaves internal glycosidic bonds of highly methylated pectins. The sequence is that of Probable pectin lyase E (pelE) from Aspergillus fumigatus (strain CBS 144.89 / FGSC A1163 / CEA10) (Neosartorya fumigata).